The primary structure comprises 102 residues: MATKKIRIRLKAYEHRILDAAAEKIVETAKRTNAEVSGPIPLPTDRSVYTVIRATHKYKDSREQFEMRTHKRLIDIIEPTQKTVDSLMKLDLPSGVNIEIKL.

It belongs to the universal ribosomal protein uS10 family. Part of the 30S ribosomal subunit.

In terms of biological role, involved in the binding of tRNA to the ribosomes. The sequence is that of Small ribosomal subunit protein uS10 from Lactococcus lactis subsp. lactis (strain IL1403) (Streptococcus lactis).